Consider the following 338-residue polypeptide: Anthranilate phosphoribosyltransferase (338 aa).

5-phospho-alpha-D-ribose 1-diphosphate contacts are provided by residues glycine 81, 84-85, serine 89, 91-94, 109-117, and alanine 121; these read GD, NVST, and KHGNRALSS. Glycine 81 contacts anthranilate. Serine 93 is a Mg(2+) binding site. Asparagine 112 contributes to the anthranilate binding site. Anthranilate is bound at residue arginine 167. Aspartate 226 and glutamate 227 together coordinate Mg(2+).

Belongs to the anthranilate phosphoribosyltransferase family. In terms of assembly, homodimer. Requires Mg(2+) as cofactor.

It carries out the reaction N-(5-phospho-beta-D-ribosyl)anthranilate + diphosphate = 5-phospho-alpha-D-ribose 1-diphosphate + anthranilate. Its pathway is amino-acid biosynthesis; L-tryptophan biosynthesis; L-tryptophan from chorismate: step 2/5. Catalyzes the transfer of the phosphoribosyl group of 5-phosphorylribose-1-pyrophosphate (PRPP) to anthranilate to yield N-(5'-phosphoribosyl)-anthranilate (PRA). The chain is Anthranilate phosphoribosyltransferase from Rhodopseudomonas palustris (strain HaA2).